The sequence spans 510 residues: Nectin-4 (510 aa).

Positions 1 to 31 are cleaved as a signal peptide; sequence MPLSLGAEMWGPAAWLLLLLLLASFTGQRLA. Residues 32–144 form the Ig-like V-type domain; it reads GELETSDLVT…GSFQARLRLR (113 aa). Residues 32 to 349 lie on the Extracellular side of the membrane; sequence GELETSDLVT…GKQVDLVSAS (318 aa). Cystine bridges form between C52/C127, C171/C223, and C270/C315. Ig-like C2-type domains follow at residues 148–237 and 248–331; these read PPLP…QRIT and ASVR…VVVD. A glycan (N-linked (GlcNAc...) asparagine) is linked at N281. The helical transmembrane segment at 350-370 threads the bilayer; that stretch reads VVVVGVIAALLFCLLVVVVVL. Residues 371 to 510 lie on the Cytoplasmic side of the membrane; sequence MSRYHRRKAQ…IYINGRGHLV (140 aa). Over residues 400–412 the composition is skewed to basic and acidic residues; the sequence is RLHSHHSDPRNQP. Residues 400–475 are disordered; the sequence is RLHSHHSDPR…GRAEEEEDRD (76 aa).

It belongs to the nectin family. As to quaternary structure, self-associates. Interacts via its Ig-like V-type domain with NECTIN1 Ig-like V-type domain. Interacts via its C-terminus with AFDN. Interacts with TIGIT.

Its subcellular location is the cell membrane. The protein localises to the cell junction. The protein resides in the adherens junction. Its function is as follows. Seems to be involved in cell adhesion through trans-homophilic and -heterophilic interactions, the latter including specifically interactions with NECTIN1. Plays a role in the senescence-associated cell size enlargement via SFK/PI3K/Rac1 and thus promotes senescent cell survival. Also participates in the innate immune response by acting as a ligand for the receptor TIGIT to inhibit NK-cell activity. The polypeptide is Nectin-4 (Bos taurus (Bovine)).